The chain runs to 65 residues: UPF0434 protein PSHAa1659 (65 aa).

Belongs to the UPF0434 family.

The sequence is that of UPF0434 protein PSHAa1659 from Pseudoalteromonas translucida (strain TAC 125).